The chain runs to 154 residues: Protein X (154 aa).

A mitochondrial targeting sequence region spans residues 68–117; the sequence is PCALRFTSARCMATTVNAHQILPKVLHKRTLGLPAMSTTDLEAYFKDCLF.

This sequence belongs to the orthohepadnavirus protein X family. May form homodimer. May interact with host CEBPA, CFLAR, CREB1, DDB1, E4F1, HBXIP, HSPD1/HSP60, NFKBIA, POLR2E and SMAD4. Interacts with host SMC5-SMC6 complex and induces its degradation. Interacts with host TRPC4AP; leading to prevent ubiquitination of TRPC4AP. Interacts with host PLSCR1; this interaction promotes ubiquitination and degradation of HBx and impairs HBx-mediated cell proliferation. Post-translationally, a fraction may be phosphorylated in insect cells and HepG2 cells, a human hepatoblastoma cell line. Phosphorylated in vitro by host protein kinase C or mitogen-activated protein kinase. N-acetylated in insect cells.

Its subcellular location is the host cytoplasm. The protein localises to the host nucleus. It localises to the host mitochondrion. Its function is as follows. Multifunctional protein that plays a role in silencing host antiviral defenses and promoting viral transcription. Does not seem to be essential for HBV infection. May be directly involved in development of cirrhosis and liver cancer (hepatocellular carcinoma). Most of cytosolic activities involve modulation of cytosolic calcium. The effect on apoptosis is controversial depending on the cell types in which the studies have been conducted. May induce apoptosis by localizing in mitochondria and causing loss of mitochondrial membrane potential. May also modulate apoptosis by binding host CFLAR, a key regulator of the death-inducing signaling complex (DISC). Promotes viral transcription by using the host E3 ubiquitin ligase DDB1 to target the SMC5-SMC6 complex to proteasomal degradation. This host complex would otherwise bind to viral episomal DNA, and prevents its transcription. Moderately stimulates transcription of many different viral and cellular transcription elements. Promoters and enhancers stimulated by HBx contain DNA binding sites for NF-kappa-B, AP-1, AP-2, c-EBP, ATF/CREB, or the calcium-activated factor NF-AT. In Hepatitis B virus genotype A3 (isolate Cameroon/CMR983/1994) (HBV-A), this protein is Protein X.